A 473-amino-acid polypeptide reads, in one-letter code: MAP kinase-activated protein kinase 5 (473 aa).

In terms of domain architecture, Protein kinase spans 22–304 (INWTQKLGAG…IEGVLDHPWL (283 aa)). ATP-binding positions include 28 to 36 (LGAGISGPV) and K51. S115 bears the Phosphoserine; by PKA mark. D148 acts as the Proton acceptor in catalysis. T182 bears the Phosphothreonine; by MAPK11, MAPK14, MAPK4, MAPK6 and PKA mark. A phosphoserine mark is found at S212 and S354. Positions 409–440 (ENEDEKLNEVMQEAWKYNRECKLLRDTLQSFS) form a coiled coil.

It belongs to the protein kinase superfamily. CAMK Ser/Thr protein kinase family. As to quaternary structure, interacts with ERK3/MAPK6 and ERK4/MAPK4 (via FRIEDE motif); the interaction is direct. Interacts with YWHAE; the interaction prevents phosphorylation of HSP27/HSPB1 leading to disrupt F-actin polymerization. Interacts with SQSTM1. In terms of processing, phosphorylated on Thr-182 ERK3/MAPK6 or ERK4/MAPK4; which is the regulatory phosphorylation site and is located on the T-loop/loop 12, leading to activation. Phosphorylation at Thr-182 by p38-alpha/MAPK14, p38-beta/MAPK11 is subject to debate. Phosphorylated at Ser-115 by PKA/PRKACA, leading to localization to the cytoplasm. Autophosphorylated. As to expression, expressed ubiquitously.

Its subcellular location is the cytoplasm. It is found in the nucleus. It catalyses the reaction L-seryl-[protein] + ATP = O-phospho-L-seryl-[protein] + ADP + H(+). The enzyme catalyses L-threonyl-[protein] + ATP = O-phospho-L-threonyl-[protein] + ADP + H(+). With respect to regulation, activated following phosphorylation at Thr-182 by p38-alpha/MAPK14, p38-beta/MAPK11, ERK2/MAPK1, ERK3/MAPK6, and ERK4/MAPK4. Activated by stress-related extracellular stimuli; such as H(2)O(2), arsenite, anisomycin TNF alpha and also PMA and the calcium ionophore A23187; but to a lesser extent. In vitro, activated by SQSTM1. Inhibited by diterpenoid alkaloid noroxoaconitine. Functionally, tumor suppressor serine/threonine-protein kinase involved in mTORC1 signaling and post-transcriptional regulation. Phosphorylates FOXO3, ERK3/MAPK6, ERK4/MAPK4, HSP27/HSPB1, p53/TP53 and RHEB. Acts as a tumor suppressor by mediating Ras-induced senescence and phosphorylating p53/TP53. Involved in post-transcriptional regulation of MYC by mediating phosphorylation of FOXO3: phosphorylation of FOXO3 leads to promote nuclear localization of FOXO3, enabling expression of miR-34b and miR-34c, 2 post-transcriptional regulators of MYC that bind to the 3'UTR of MYC transcript and prevent MYC translation. Acts as a negative regulator of mTORC1 signaling by mediating phosphorylation and inhibition of RHEB. Part of the atypical MAPK signaling via its interaction with ERK3/MAPK6 or ERK4/MAPK4: the precise role of the complex formed with ERK3/MAPK6 or ERK4/MAPK4 is still unclear, but the complex follows a complex set of phosphorylation events: upon interaction with atypical MAPK (ERK3/MAPK6 or ERK4/MAPK4), ERK3/MAPK6 (or ERK4/MAPK4) is phosphorylated and then mediates phosphorylation and activation of MAPKAPK5, which in turn phosphorylates ERK3/MAPK6 (or ERK4/MAPK4). Mediates phosphorylation of HSP27/HSPB1 in response to PKA/PRKACA stimulation, inducing F-actin rearrangement. In Homo sapiens (Human), this protein is MAP kinase-activated protein kinase 5 (MAPKAPK5).